Consider the following 492-residue polypeptide: MATFKDACFHYRRVTKLNRELLRIGANSVWTPVSTNKIRGWCVECCQLTELTFCHGCSLAHVCQWCIQNKRCFLDNEPHLLKLRTFESPITKEKLQCIIDLYNLLFPINSSIVNKFKKTVKQRKCRNEFDKLWYNQLLLPITLNAAVFKFHSRKVYVFGFYEGSSPCVNLPYKLVNCIDLYDKLLLDQVNFERMSSLPSNLQSIYANKYFKLSRIPSMKLKQIYYSDFSKQNLINKYKFKSRIVLRNFTEFTWDFQLSLHYDLFNNKDKIFAALSTSSLKQFETHDLNLGRVKADVFELGRHCKPNYISSNHWQPASTISQCKWCNVKYAFRDMDWKMESMYNELLSFIQSCYKSNVSVGHCSSIERAYPLVKDVLWHSITKYIDQTIEKLFNVMNPVQVNNQKVISFHWQIDIALYTHIKMILKTERLPFTFTLDQFNSVIKGIVNQWCNVNELDNLPLCTEQTDTLVRLEEEGKLAEEYELLISDSEDDD.

Positions 1–81 (MATFKDACFH…CFLDNEPHLL (81 aa)) are RNA-binding. Residues 42 to 79 (CVECCQLTELTFCHGCSLAHVCQWCIQNKRCFLDNEPH) form a zinc-binding domain region. Positions 82–176 (KLRTFESPIT…CVNLPYKLVN (95 aa)) are important for cytoskeleton localization. The tract at residues 318 to 492 (TISQCKWCNV…LLISDSEDDD (175 aa)) is interaction with host IRF3. The short motif at 483–486 (LLIS) is the pLxIS motif element.

The protein belongs to the rotavirus NSP1 family. Interacts (via C-terminus) with host IRF3; this interaction leads to IRF3 degradation. Interacts with host IRF7; this interaction leads to IRF7 degradation. Interacts with host CUL1 and CUL3.

It is found in the host cytoplasm. The protein resides in the host cytoskeleton. Functionally, plays a role in the inhibition of host innate immunity by inducing the degradation of key host factors required to activate interferon production such as IRF3, IRF5 or IRF7. Associates with components of cullin RING ligases (CRLs) including CUL1 or CUL3, which are essential multisubunit ubiquitination complexes, to modulate their activities. The polypeptide is Non-structural protein 1 (Oryctolagus cuniculus (Rabbit)).